A 208-amino-acid chain; its full sequence is Small ribosomal subunit protein eS8 (208 aa).

The disordered stretch occupies residues M1–Y27. G2 carries the N-myristoyl glycine lipid modification. The span at W8–K26 shows a compositional bias: basic residues. 2 positions are modified to N6-acetyllysine: K37 and K128. Residue T130 is modified to Phosphothreonine. Phosphoserine is present on S160. Glycyl lysine isopeptide (Lys-Gly) (interchain with G-Cter in SUMO2) cross-links involve residues K170 and K193.

This sequence belongs to the eukaryotic ribosomal protein eS8 family. As to quaternary structure, component of the small ribosomal subunit. Identified in a IGF2BP1-dependent mRNP granule complex containing untranslated mRNAs. Part of the small subunit (SSU) processome, composed of more than 70 proteins and the RNA chaperone small nucleolar RNA (snoRNA) U3.

It localises to the cytoplasm. The protein resides in the membrane. It is found in the nucleus. The protein localises to the nucleolus. Its function is as follows. Component of the small ribosomal subunit. The ribosome is a large ribonucleoprotein complex responsible for the synthesis of proteins in the cell. Part of the small subunit (SSU) processome, first precursor of the small eukaryotic ribosomal subunit. During the assembly of the SSU processome in the nucleolus, many ribosome biogenesis factors, an RNA chaperone and ribosomal proteins associate with the nascent pre-rRNA and work in concert to generate RNA folding, modifications, rearrangements and cleavage as well as targeted degradation of pre-ribosomal RNA by the RNA exosome. This Mus musculus (Mouse) protein is Small ribosomal subunit protein eS8 (Rps8).